The chain runs to 223 residues: Sigma non-opioid intracellular receptor 1 (223 aa).

The Lumenal portion of the chain corresponds to 1 to 9; the sequence is MQWALGRRW. The targeting to endoplasmic reticulum-associated lipid droplets stretch occupies residues 2 to 8; sequence QWALGRR. A helical membrane pass occupies residues 10-30; that stretch reads VWAALLLAAAAVLTQVVWLWL. At 31 to 223 the chain is on the cytoplasmic side; the sequence is GTQSFVFQHE…FTTYLFGQDS (193 aa). The important for ligand-binding stretch occupies residues 99–106; sequence SLSEYVLL. The segment at 177–223 is C-terminal hydrophobic region; sequence VIPSTLAFALADTIFSTQDFLTLFYTLRAYARGLRLEFTTYLFGQDS.

This sequence belongs to the ERG2 family. In terms of assembly, homotrimer. Forms a ternary complex with ANK2 and ITPR3. The complex is disrupted by agonists. Interacts with KCNA4. Interacts with KCNA2; cocaine consumption leads to increased interaction. Interacts with RNF112 in an oxidative stress-regulated manner.

It is found in the nucleus inner membrane. Its subcellular location is the nucleus outer membrane. The protein localises to the nucleus envelope. It localises to the cytoplasmic vesicle. The protein resides in the endoplasmic reticulum membrane. It is found in the membrane. Its subcellular location is the lipid droplet. The protein localises to the cell junction. It localises to the cell membrane. The protein resides in the cell projection. It is found in the growth cone. Its subcellular location is the postsynaptic density membrane. Functionally, functions in lipid transport from the endoplasmic reticulum and is involved in a wide array of cellular functions probably through regulation of the biogenesis of lipid microdomains at the plasma membrane. Involved in the regulation of different receptors it plays a role in BDNF signaling and EGF signaling. Also regulates ion channels like the potassium channel and could modulate neurotransmitter release. Plays a role in calcium signaling through modulation together with ANK2 of the ITP3R-dependent calcium efflux at the endoplasmic reticulum. Plays a role in several other cell functions including proliferation, survival and death. Originally identified for its ability to bind various psychoactive drugs it is involved in learning processes, memory and mood alteration. Necessary for proper mitochondrial axonal transport in motor neurons, in particular the retrograde movement of mitochondria. Plays a role in protecting cells against oxidative stress-induced cell death via its interaction with RNF112. This is Sigma non-opioid intracellular receptor 1 (SIGMAR1) from Mustela erminea (Ermine).